A 373-amino-acid polypeptide reads, in one-letter code: tRNA-specific 2-thiouridylase MnmA (373 aa).

Residues G12–S19 and M38 contribute to the ATP site. An interaction with target base in tRNA region spans residues N98–D100. The active-site Nucleophile is the C103. C103 and C200 form a disulfide bridge. G127 provides a ligand contact to ATP. An interaction with tRNA region spans residues K150–Q152. The active-site Cysteine persulfide intermediate is C200. Positions R312–Y313 are interaction with tRNA.

The protein belongs to the MnmA/TRMU family.

The protein localises to the cytoplasm. It carries out the reaction S-sulfanyl-L-cysteinyl-[protein] + uridine(34) in tRNA + AH2 + ATP = 2-thiouridine(34) in tRNA + L-cysteinyl-[protein] + A + AMP + diphosphate + H(+). Its function is as follows. Catalyzes the 2-thiolation of uridine at the wobble position (U34) of tRNA, leading to the formation of s(2)U34. The polypeptide is tRNA-specific 2-thiouridylase MnmA (Streptococcus pneumoniae (strain ATCC BAA-255 / R6)).